Reading from the N-terminus, the 337-residue chain is MSDAFKPLLSRLADGATLSDDDADAFFSACLRGEPTPAQVGAALTAMRMRGETLGEIAACARAMRRAAIHLEPPFPTIDVCGTGGDGLHTLNISTAVGFVAAGGGLKVAKHGNRAMSSKSGTADVLGELGVNIAAPPEKQLQALDEAGICFLFAPAHHSAMRHVSPIRAELGFRTIFNLLGPLTNPAGAQRQVVGVFAERWVKPLAQALGMLGSEKAWVVHGAGLDELTTTGETSVAEFSDGKVRLFTITPEAVGLRRAALADITGGSPAENAQALRRLLAGETGAYRDIVALNAAAAFLVADKVETLREGVELAGRVLDEGRAQAALERLVEITAP.

5-phospho-alpha-D-ribose 1-diphosphate contacts are provided by residues G82, 85-86 (GD), T90, 92-95 (NIST), 110-118 (KHGNRAMSS), and T122. Residue G82 coordinates anthranilate. S94 contributes to the Mg(2+) binding site. N113 provides a ligand contact to anthranilate. R168 contacts anthranilate. Positions 226 and 227 each coordinate Mg(2+).

Belongs to the anthranilate phosphoribosyltransferase family. In terms of assembly, homodimer. Requires Mg(2+) as cofactor.

It carries out the reaction N-(5-phospho-beta-D-ribosyl)anthranilate + diphosphate = 5-phospho-alpha-D-ribose 1-diphosphate + anthranilate. It functions in the pathway amino-acid biosynthesis; L-tryptophan biosynthesis; L-tryptophan from chorismate: step 2/5. In terms of biological role, catalyzes the transfer of the phosphoribosyl group of 5-phosphorylribose-1-pyrophosphate (PRPP) to anthranilate to yield N-(5'-phosphoribosyl)-anthranilate (PRA). The protein is Anthranilate phosphoribosyltransferase of Phenylobacterium zucineum (strain HLK1).